The chain runs to 274 residues: Large ribosomal subunit protein uL2cy (274 aa).

Disordered stretches follow at residues 1–20 (MAIH…AVDS) and 224–274 (NPVD…RRSK).

This sequence belongs to the universal ribosomal protein uL2 family. Part of the 50S ribosomal subunit.

The protein localises to the plastid. Its subcellular location is the chloroplast. This is Large ribosomal subunit protein uL2cy (rpl2-B) from Populus alba (White poplar).